We begin with the raw amino-acid sequence, 431 residues long: Magnetosome protein MamH (431 aa).

The next 11 helical transmembrane spans lie at 21-41 (LLSALCMVFMTLVVAIQPLFL), 57-77 (ANVQVVTEVLDLFIFAYLGYL), 86-106 (IIVAGFLVAAIGAVIAPLSPW), 107-127 (IGGASIGALVVYYVSRVIMSA), 156-176 (TAFMMAFGVTLVYAVLMQIPA), 178-198 (AGIAVTMLLTAAVSLAGAWLA), 243-263 (MVFVGLFLMLWFIYFADLIKV), 274-294 (ILIGLMGAVVMLSIPVWRSFI), 302-321 (AVLLGMVLSALGFIMLGFII), 358-378 (LLGSVLGAFNVIGCIGIIFFV), and 380-400 (VGGFLFDYVGPPAPFVFTGVG).

The protein belongs to the major facilitator superfamily.

It localises to the magnetosome membrane. Its function is as follows. Required for correct biomineralization of the magnetosome; probably transports some form of iron. Partially functionally redundant with MamZ. The polypeptide is Magnetosome protein MamH (mamH) (Paramagnetospirillum magneticum (strain ATCC 700264 / AMB-1) (Magnetospirillum magneticum)).